The chain runs to 116 residues: Large ribosomal subunit protein bL17 (116 aa).

The protein belongs to the bacterial ribosomal protein bL17 family. In terms of assembly, part of the 50S ribosomal subunit. Contacts protein L32.

This Synechococcus sp. (strain CC9902) protein is Large ribosomal subunit protein bL17.